We begin with the raw amino-acid sequence, 343 residues long: MDDNKRKSLDAALKSLDKTFGKGTILRLGDKEVEQIDSIGTGSVGLDLALGIGGVPKGRIIEIYGPESSGKTTLTLHIIAECQKAGGVCAFIDAEHALDVKYAKNLGVNTDDLYVSQPDFGEQALEIVETIARSGAVDLIVVDSVAALTPKAEIEGDMGDQHVGLQARLMSQALRKLTGIVHKMNTTVIFINQIRMKIGAMGYGTPETTTGGNALKFYASVRLDVRKVATLKQNEEPIGNRVKVKVVKNKVAPPFRQAEFDVMFGEGLSREGELIDYGVKLDIVDKSGAWFSYKDKKLGQGRENSKAFLKENPEIADEITKAIQNSMGIEGMISGSEDDEGEE.

65–72 (GPESSGKT) contributes to the ATP binding site.

Belongs to the RecA family.

Its subcellular location is the cytoplasm. Its function is as follows. Can catalyze the hydrolysis of ATP in the presence of single-stranded DNA, the ATP-dependent uptake of single-stranded DNA by duplex DNA, and the ATP-dependent hybridization of homologous single-stranded DNAs. It interacts with LexA causing its activation and leading to its autocatalytic cleavage. This is Protein RecA from Campylobacter jejuni subsp. jejuni serotype O:6 (strain 81116 / NCTC 11828).